The following is a 574-amino-acid chain: 5'-nucleotidase (574 aa).

Residues 1–26 form the signal peptide; that stretch reads MNPGAARTPALRILALGALLWPAARP. Zn(2+) contacts are provided by Asp-36 and His-38. Residues Cys-51 and Cys-57 are joined by a disulfide bond. A glycan (N-linked (GlcNAc...) asparagine) is linked at Asn-53. Asp-85, Asn-117, His-220, and His-243 together coordinate Zn(2+). Residues Asn-311 and Asn-333 are each glycosylated (N-linked (GlcNAc...) asparagine). 2 cysteine pairs are disulfide-bonded: Cys-353–Cys-358 and Cys-365–Cys-387. AMP is bound at residue Arg-354. Arg-354 serves as a coordination point for IMP. AMP-binding residues include Asn-390 and Arg-395. Asn-390 and Arg-395 together coordinate IMP. N-linked (GlcNAc...) asparagine glycosylation occurs at Asn-403. Residue Phe-417 coordinates AMP. IMP is bound at residue Phe-417. A disulfide bridge links Cys-476 with Cys-479. Residues Phe-500 and Asp-506 each contribute to the AMP site. The IMP site is built by Phe-500 and Asp-506. A lipid anchor (GPI-anchor amidated serine) is attached at Ser-549. Positions 550–574 are cleaved as a propeptide — removed in mature form; sequence AGSHCCGSFSLIFLSVLAVIIILYQ.

Belongs to the 5'-nucleotidase family. In terms of assembly, homodimer. Requires Zn(2+) as cofactor.

It localises to the cell membrane. The enzyme catalyses a ribonucleoside 5'-phosphate + H2O = a ribonucleoside + phosphate. It catalyses the reaction a 2'-deoxyribonucleoside 5'-phosphate + H2O = a 2'-deoxyribonucleoside + phosphate. It carries out the reaction dTMP + H2O = thymidine + phosphate. The catalysed reaction is CMP + H2O = cytidine + phosphate. The enzyme catalyses IMP + H2O = inosine + phosphate. It catalyses the reaction AMP + H2O = adenosine + phosphate. It carries out the reaction GMP + H2O = guanosine + phosphate. The catalysed reaction is UMP + H2O = uridine + phosphate. The enzyme catalyses dAMP + H2O = 2'-deoxyadenosine + phosphate. It catalyses the reaction dCMP + H2O = 2'-deoxycytidine + phosphate. Catalyzes the hydrolysis of nucleotide monophosphates, releasing inorganic phosphate and the corresponding nucleoside, with AMP being the preferred substrate. Shows a preference for ribonucleotide monophosphates over their equivalent deoxyribose forms. Other substrates include IMP, UMP, GMP, CMP, dAMP, dCMP, dTMP, NAD and NMN. The protein is 5'-nucleotidase (NT5E) of Bos taurus (Bovine).